The chain runs to 59 residues: Potassium channel toxin alpha-KTx 15.4 (59 aa).

The N-terminal stretch at 1 to 22 (MKFSSIILLTLLICSMSIFGNC) is a signal peptide. A Pyrrolidone carboxylic acid modification is found at Q23. 3 cysteine pairs are disulfide-bonded: C30-C50, C35-C55, and C39-C57.

As to expression, expressed by the venom gland.

Its subcellular location is the secreted. Its function is as follows. Blocker of A-type voltage-gated potassium channels of cerebellar granular cells. May also inhibit Kv4/KCND when coexpressed with DPP6 or DPP10. The occlusion of the outer entry of the K(+) conducting pore is partially reversible and affects both open and closed channels. It shares the same target in rat brain than BmTX3 (AC Q8I0L5) and AmmTX3 (AC P60208). This chain is Potassium channel toxin alpha-KTx 15.4, found in Androctonus australis (Sahara scorpion).